We begin with the raw amino-acid sequence, 848 residues long: Neprilysin-11 (848 aa).

The Cytoplasmic portion of the chain corresponds to 1–74 (MPFGNDPPDY…WWKSRTTMEK (74 aa)). Residues 75-95 (LLLPVLLLFCLLTAVLLAVII) form a helical; Signal-anchor for type II membrane protein membrane-spanning segment. Residues 96-848 (NTDKRIEAMK…VNPDHKCIVW (753 aa)) are Extracellular-facing. Residues 108–161 (HATQTEHAGFGDPTENPTKTAEDPRVPPIVPEAPTSPEPEVTTSTEKPKEPEVC) form a disordered region. Positions 133–144 (VPPIVPEAPTSP) are enriched in pro residues. The Peptidase M13 domain maps to 160–848 (VCSTPGCVRA…VNPDHKCIVW (689 aa)). Cysteine 161 and cysteine 166 form a disulfide bridge. Residues asparagine 178, asparagine 249, asparagine 284, asparagine 312, asparagine 337, asparagine 364, asparagine 398, and asparagine 438 are each glycosylated (N-linked (GlcNAc...) asparagine). Cystine bridges form between cysteine 184/cysteine 833, cysteine 192/cysteine 793, cysteine 247/cysteine 509, and cysteine 719/cysteine 845. Zn(2+) is bound at residue histidine 682. The active site involves glutamate 683. A Zn(2+)-binding site is contributed by histidine 686. The N-linked (GlcNAc...) asparagine glycan is linked to asparagine 726. Glutamate 744 provides a ligand contact to Zn(2+). Aspartate 748 functions as the Proton donor in the catalytic mechanism.

The protein belongs to the peptidase M13 family. Requires Zn(2+) as cofactor.

It localises to the cell membrane. Probable cell surface protease. The sequence is that of Neprilysin-11 (nep-11) from Caenorhabditis elegans.